Here is a 160-residue protein sequence, read N- to C-terminus: Small ribosomal subunit protein uS9 (160 aa).

Belongs to the universal ribosomal protein uS9 family.

This Mesorhizobium japonicum (strain LMG 29417 / CECT 9101 / MAFF 303099) (Mesorhizobium loti (strain MAFF 303099)) protein is Small ribosomal subunit protein uS9.